A 1143-amino-acid polypeptide reads, in one-letter code: MEAAAMAVTAATGALAPVLVKLAALLDDGECNLLEGSRSDAEFIRSELEAVHSLLTPNILGRMGDDDAACKDGLIAEVRELSYDLDDAVDDFLELNFEQRRSASPFGELKARVEERVSNRFSDWKLPAASLPPSSVHRRAGLPPPDAGLVGMHKRKEELIELLEQGSSDASRWRKRKPHVPLRIMGGEMQKIVFKIPMVDDKSRTKAMSLVASTVGVHSVAIAGDLRDEVVVVGDGIDSINLVSALRKKVGHAELLQVSQVKEDVKEITAMLAPVKSICEFHEVKTICILGLPGGGKTTIARVLYHALGTQFQCRVFASISPSSSPSPNLTETLADIFAQAQLGVTDTLSTPYGGSGTGRALQQHLIDNISAFLLNKKYLIVIDDIWHWEEWEVIRKSIPKNDLGGRIIMTTRLNSIAEKCHTDDNDVFVYEVGDLDNNDALSLSWGIATKSGAGNRIGTGEDNSCYDIVNMCYGMPLALIWLSSALVGEIEELGGAEVKKCRDLRHIEDGILDIPSLQPLAESLCLGYNHLPLYLRTLLLYCSAYHWSNRIERGRLVRRWIAEGFVSEEKEAEGYFGELINRGWITQHGDNNSYNYYEIHPVMLAFLRCKSKEYNFLTCLGLGSDTSTSASSPRLIRRLSLQGGYPVDCLSSMSMDVSHTCSLVVLGDVARPKGIPFYMFKRLRVLDLEDNKDIQDSHLQGICEQLSLRVRYLGLKGTRIRKLPQEMRKLKHLEILYVGSTRISELPQEIGELKHLRILDVRNTDITELPLQIRELQHLHTLDVRNTPISELPPQVGKLQNLKIMCVRSTGVRELPKEIGELNHLQTLDVRNTRVRELPWQAGQISQSLRVLAGDSGDGVRLPEGVCEALINGIPGATRAKCREVLSIAIIDRFGPPLVGIFKVPGSHMRIPKMIKDHFRVLSCLDIRLCHKLEDDDQKFLAEMPNLQTLVLRFEALPRQPITINGTGFQMLESFRVDSRLPRIAFHEDAMPNLKLLEFKFYAGPASNDAIGITNLKSLQKVVFRCSPWYKSDAPGISATIDVVKKEAEEHPNRPITLLINAGYKEISTESHGSSENIAGSSGIDTEPAQAQHDNLPAVRDDYKGKGILLDGRCPTCGRATKIEEETQDRVADIEIQTETTS.

A structured coiled coil (CC) domain region spans residues 1-190; sequence MEAAAMAVTA…PLRIMGGEMQ (190 aa). One can recognise an HMA domain in the interval 189-258; that stretch reads MQKIVFKIPM…KVGHAELLQV (70 aa). Positions 191–264 are HMA-like domain; the sequence is KIVFKIPMVD…LLQVSQVKED (74 aa). Residues 282–570 enclose the NB-ARC domain; it reads HEVKTICILG…WIAEGFVSEE (289 aa). LRR repeat units lie at residues 681 to 706, 708 to 731, 732 to 754, 756 to 777, 778 to 800, 802 to 823, 824 to 848, 945 to 968, 979 to 1002, and 1004 to 1027; these read FKRLRVLDLEDNKDIQDSHLQGICEQ, SLRVRYLGLKGTRIRKLPQEMRKL, KHLEILYVGSTRISELPQEIGEL, HLRILDVRNTDITELPLQIREL, QHLHTLDVRNTPISELPPQVGKL, NLKIMCVRSTGVRELPKEIGEL, NHLQTLDVRNTRVRELPWQAGQISQ, MPNLQTLVLRFEALPRQPITINGT, DSRLPRIAFHEDAMPNLKLLEFKF, and AGPASNDAIGITNLKSLQKVVFRC.

It belongs to the disease resistance NB-LRR family. In terms of assembly, interacts with AVR-Pik through its N-terminal part containing the HMA-like domain.

Its function is as follows. Disease resistance (R) protein that specifically recognizes the AVR-Pik effector avirulence protein from M.oryzae. Resistance proteins guard the plant against pathogens that contain an appropriate avirulence protein via an indirect interaction with this avirulence protein. That triggers a defense system including the hypersensitive response, which restricts the pathogen growth. Contribution of Pik-2 is required to recognize the effector avirulence protein AVR-Pik. The sequence is that of Disease resistance protein Pik-1 from Oryza sativa subsp. japonica (Rice).